Consider the following 172-residue polypeptide: Epithelial membrane protein 2 (172 aa).

Helical transmembrane passes span 1-21, 72-92, 100-120, and 148-168; these read MLVI…LLFI, TMIL…LQLF, FVLT…GASV, and FILA…YMIL.

Belongs to the PMP-22/EMP/MP20 family. Interacts with PTK2; regulates PTK2 activation and localization. Interacts with ITGB3; regulates the levels of the heterodimer ITGA5-ITGB3 integrin surface expression. Interacts with P2RX7 (via C-terminus). Interacts with ITGB1; the interaction may be direct or indirect and ITGB1 has a heterodimer form. In terms of tissue distribution, expressed in glomeruli.

It is found in the golgi apparatus membrane. The protein resides in the cell membrane. Its subcellular location is the apical cell membrane. It localises to the membrane raft. The protein localises to the cytoplasm. It is found in the nucleus. The protein resides in the perinuclear region. In terms of biological role, functions as a key regulator of cell membrane composition by regulating protein surface expression. Also, plays a role in regulation of processes including cell migration, cell proliferation, cell contraction and cell adhesion. Regulates transepithelial migration of neutrophils into the alveolar lumen, potentially via mediation of cell surface expression of adhesion markers and lipid raft formation. Negatively regulates caveolae formation by reducing CAV1 expression and CAV1 amount by increasing lysosomal degradation. Facilitates surface trafficking and the formation of lipid rafts bearing GPI-anchor proteins. Regulates surface expression of MHC1 and ICAM1 proteins increasing susceptibility to T-cell mediated cytotoxicity. Regulates the plasma membrane expression of the integrin heterodimers ITGA6-ITGB1, ITGA5-ITGB3 and ITGA5-ITGB1 resulting in modulation of cell-matrix adhesion. Also regulates many processes through PTK2. Regulates blood vessel endothelial cell migration and angiogenesis by regulating VEGF protein expression through PTK2 activation. Regulates cell migration and cell contraction through PTK2 and SRC activation. Regulates focal adhesion density, F-actin conformation and cell adhesion capacity through interaction with PTK2. Positively regulates cell proliferation. Plays a role during cell death and cell blebbing. Promotes angiogenesis and vasculogenesis through induction of VEGFA via a HIF1A-dependent pathway. Also plays a role in embryo implantation by regulating surface trafficking of integrin heterodimer ITGA5-ITGB3. Plays a role in placental angiogenesis and uterine natural killer cell regulation at the maternal-fetal placental interface, however not required in the maternal tissues for a viable pregnancy. Involved in the early stages of embryogenic development and cardiogenesis, potentially via regulation of epithelial-mesenchymal transition timing. May play a role in glomerular filtration. The protein is Epithelial membrane protein 2 (Emp2) of Rattus norvegicus (Rat).